The chain runs to 353 residues: Photosystem II protein D1 (353 aa).

An N-acetylthreonine modification is found at Thr2. Thr2 is modified (phosphothreonine). The next 3 helical transmembrane spans lie at 29 to 46 (YIGW…TATS), 118 to 133 (HFLL…EWEL), and 142 to 156 (WIAV…AATA). His118 lines the chlorophyll a pocket. Tyr126 lines the pheophytin a pocket. 2 residues coordinate [CaMn4O5] cluster: Asp170 and Glu189. Residues 197–218 (FHMLGVAGVFGGSLFSAMHGSL) form a helical membrane-spanning segment. Residue His198 participates in chlorophyll a binding. Residues His215 and 264 to 265 (SF) each bind a quinone. Fe cation is bound at residue His215. Residue His272 coordinates Fe cation. The helical transmembrane segment at 274-288 (LLAAWPVVGIWFTAL) threads the bilayer. His332, Glu333, Asp342, and Ala344 together coordinate [CaMn4O5] cluster. Positions 345–353 (AVEAPSTNG) are excised as a propeptide.

The protein belongs to the reaction center PufL/M/PsbA/D family. PSII is composed of 1 copy each of membrane proteins PsbA, PsbB, PsbC, PsbD, PsbE, PsbF, PsbH, PsbI, PsbJ, PsbK, PsbL, PsbM, PsbT, PsbX, PsbY, PsbZ, Psb30/Ycf12, at least 3 peripheral proteins of the oxygen-evolving complex and a large number of cofactors. It forms dimeric complexes. The D1/D2 heterodimer binds P680, chlorophylls that are the primary electron donor of PSII, and subsequent electron acceptors. It shares a non-heme iron and each subunit binds pheophytin, quinone, additional chlorophylls, carotenoids and lipids. D1 provides most of the ligands for the Mn4-Ca-O5 cluster of the oxygen-evolving complex (OEC). There is also a Cl(-1) ion associated with D1 and D2, which is required for oxygen evolution. The PSII complex binds additional chlorophylls, carotenoids and specific lipids. serves as cofactor. Post-translationally, tyr-161 forms a radical intermediate that is referred to as redox-active TyrZ, YZ or Y-Z. In terms of processing, C-terminally processed by CTPA; processing is essential to allow assembly of the oxygen-evolving complex and thus photosynthetic growth.

It is found in the plastid. The protein localises to the chloroplast thylakoid membrane. The enzyme catalyses 2 a plastoquinone + 4 hnu + 2 H2O = 2 a plastoquinol + O2. Its function is as follows. Photosystem II (PSII) is a light-driven water:plastoquinone oxidoreductase that uses light energy to abstract electrons from H(2)O, generating O(2) and a proton gradient subsequently used for ATP formation. It consists of a core antenna complex that captures photons, and an electron transfer chain that converts photonic excitation into a charge separation. The D1/D2 (PsbA/PsbD) reaction center heterodimer binds P680, the primary electron donor of PSII as well as several subsequent electron acceptors. In Dioscorea elephantipes (Elephant's foot yam), this protein is Photosystem II protein D1.